The sequence spans 1115 residues: MSFVHLQVHSGYSLLNSAAAVEELVSEADRLGYASLALTDDHVMYGAIQFYKACKARGINPIIGLTASVFTDDSELEAYPLVLLAKSNTGYQNLLKISSVLQSKSKGGLKPKWLHSYREGIIAITPGEKGYIETLLEGGLFEQAAQASLEFQSIFGKGAFYFSYQPFKGNQVLSEQILKLSEETGIPVTATGDVHYIRKEDKAAYRCLKAIKAGEKLTDAPAEDLPDLDLKPLEEMQNIYREHPEALQASVEIAEQCRVDVSLGQTRLPSFPTPDGTSADDYLTDICMEGLRSRFGKPDERYLRRLQYELDVIKRMKFSDYFLIVWDFMKHAHEKGIVTGPGRGSAAGSLVAYVLYITDVDPIKHHLLFERFLNPERVSMPDIDIDFPDTRRDEVIQYVQQKYGAMHVAQIITFGTLAAKAALRDVGRVFGVSPKEADQLAKLIPSRPGMTLDEARQQSPQLDKRLRESSLLQQVYSIARKIEGLPRHASTHAAGVVLSEEPLTDVVPLQEGHEGIYLTQYAMDHLEDLGLLKMDFLGLRNLTLIESITSMIEKEENIKIDLSSISYSDDKTFSLLSKGDTTGIFQLESAGMRSVLKRLKPSGLEDIVAVNALYRPGPMENIPLFIDRKHGRAPVHYPHEDLRSILEDTYGVIVYQEQIMMIASRMAGFSLGEADLLRRAVSKKKKEILDRERSHFVEGCLKKEYSVDTANEVYDLIVKFANYGFNRSHAVAYSMIGCQLAYLKAHYPLYFMCGLLTSVIGNEDKISQYLYEAKGSGIRILPPSVNKSSFPFTVENGSVRYSLRAIKSVGVSAVKDIYKARKEKPFEDLFDFCFRVPSKSVNRKMLEALIFSGAMDEFGQNRATLLASIDVALEHAELFAADDDQMGLFLDESFSIKPKYVETEELPLVDLLAFEKETLGIYFSNHPLSAFRKQLTAQGAVSILQAQRAVKRQLSLGVLLSKIKTIRTKTGQNMAFLTLSDETGEMEAVVFPEQFRQLSPVLREGALLFTAGKCEVRQDKIQFIMSRAELLEDMDAEKAPSVYIKIESSQHSQEILAKIKRILLEHKGETGVYLYYERQKQTIKLPESFHINADHQVLYRLKELLGQKNVVLKQW.

The protein belongs to the DNA polymerase type-C family. DnaE subfamily. As to quaternary structure, DNA polymerase III contains a core (composed of alpha, epsilon and theta chains) that associates with a tau subunit. This core dimerizes to form the PolIII' complex. PolIII' associates with the gamma complex (composed of gamma, delta, delta', psi and chi chains) and with the beta chain to form the complete DNA polymerase III complex. Interacts with SSB (sbbA) via the latter's 6 C-terminal residues.

The protein resides in the cytoplasm. It localises to the nucleoid. It carries out the reaction DNA(n) + a 2'-deoxyribonucleoside 5'-triphosphate = DNA(n+1) + diphosphate. DNA polymerase III is a complex, multichain enzyme responsible for most of the replicative synthesis in bacteria. This DNA polymerase also exhibits 3' to 5' exonuclease activity. The alpha chain is the DNA polymerase. The polypeptide is DNA polymerase III subunit alpha (dnaE) (Bacillus subtilis (strain 168)).